The chain runs to 86 residues: Anti-adapter protein IraP (86 aa).

Residues 1-36 (MKNLIAELLFKLAQKEEESKELCAQVEALEIIVTAM) adopt a coiled-coil conformation.

Belongs to the IraP family. In terms of assembly, interacts with RssB.

Its subcellular location is the cytoplasm. Functionally, inhibits RpoS proteolysis by regulating RssB activity, thereby increasing the stability of the sigma stress factor RpoS especially during phosphate starvation, but also in stationary phase and during nitrogen starvation. Its effect on RpoS stability is due to its interaction with RssB, which probably blocks the interaction of RssB with RpoS, and the consequent delivery of the RssB-RpoS complex to the ClpXP protein degradation pathway. This is Anti-adapter protein IraP from Escherichia coli O127:H6 (strain E2348/69 / EPEC).